The sequence spans 182 residues: UPF0149 protein HI_0817 (182 aa).

The protein belongs to the UPF0149 family.

The protein is UPF0149 protein HI_0817 of Haemophilus influenzae (strain ATCC 51907 / DSM 11121 / KW20 / Rd).